Consider the following 143-residue polypeptide: Nucleoside diphosphate kinase (143 aa).

The ATP site is built by K11, F59, R87, T93, R104, and N114. Residue H117 is the Pros-phosphohistidine intermediate of the active site.

It belongs to the NDK family. Homotetramer. Mg(2+) is required as a cofactor.

It is found in the cytoplasm. It carries out the reaction a 2'-deoxyribonucleoside 5'-diphosphate + ATP = a 2'-deoxyribonucleoside 5'-triphosphate + ADP. The enzyme catalyses a ribonucleoside 5'-diphosphate + ATP = a ribonucleoside 5'-triphosphate + ADP. In terms of biological role, major role in the synthesis of nucleoside triphosphates other than ATP. The ATP gamma phosphate is transferred to the NDP beta phosphate via a ping-pong mechanism, using a phosphorylated active-site intermediate. In Psychrobacter cryohalolentis (strain ATCC BAA-1226 / DSM 17306 / VKM B-2378 / K5), this protein is Nucleoside diphosphate kinase.